A 433-amino-acid chain; its full sequence is Serine hydroxymethyltransferase (433 aa).

Residues Leu-121 and 125–127 (GHI) contribute to the (6S)-5,6,7,8-tetrahydrofolate site. Lys-231 is modified (N6-(pyridoxal phosphate)lysine).

The protein belongs to the SHMT family. Homodimer. Requires pyridoxal 5'-phosphate as cofactor.

Its subcellular location is the cytoplasm. It functions in the pathway amino-acid biosynthesis; glycine biosynthesis; glycine from L-serine: step 1/1. Catalyzes the reversible interconversion of serine and glycine with a modified folate serving as the one-carbon carrier. Also exhibits a pteridine-independent aldolase activity toward beta-hydroxyamino acids, producing glycine and aldehydes, via a retro-aldol mechanism. This is Serine hydroxymethyltransferase from Picrophilus torridus (strain ATCC 700027 / DSM 9790 / JCM 10055 / NBRC 100828 / KAW 2/3).